The following is a 691-amino-acid chain: Putative calcium up-regulated protein I (691 aa).

Positions 47-174 (SNCYLKEKPQ…NYTSQIWTYN (128 aa)) constitute a Ricin B-type lectin domain.

The protein belongs to the cup family.

In Dictyostelium discoideum (Social amoeba), this protein is Putative calcium up-regulated protein I (cupI).